The primary structure comprises 147 residues: Ubiquitin-conjugating enzyme E2 4 (147 aa).

A UBC core domain is found at 1 to 147; the sequence is MALKRINREL…AREWTRKYAI (147 aa). The active-site Glycyl thioester intermediate is Cys-85.

The protein belongs to the ubiquitin-conjugating enzyme family. Interacts with the E1 ubiquitin-activating enzyme ptr3 and E3 ubiquitin-protein ligase pub2.

The enzyme catalyses S-ubiquitinyl-[E1 ubiquitin-activating enzyme]-L-cysteine + [E2 ubiquitin-conjugating enzyme]-L-cysteine = [E1 ubiquitin-activating enzyme]-L-cysteine + S-ubiquitinyl-[E2 ubiquitin-conjugating enzyme]-L-cysteine.. The protein operates within protein modification; protein ubiquitination. Its function is as follows. E2 ubiquitin-conjugating enzyme that catalyzes the covalent attachment of ubiquitin to other proteins. Mediates the selective degradation of short-lived and abnormal proteins. Mediates ubiquitination of pex5. This is Ubiquitin-conjugating enzyme E2 4 (ubc4) from Schizosaccharomyces pombe (strain 972 / ATCC 24843) (Fission yeast).